Consider the following 188-residue polypeptide: Elongation factor P (188 aa).

It belongs to the elongation factor P family.

The protein resides in the cytoplasm. The protein operates within protein biosynthesis; polypeptide chain elongation. Its function is as follows. Involved in peptide bond synthesis. Stimulates efficient translation and peptide-bond synthesis on native or reconstituted 70S ribosomes in vitro. Probably functions indirectly by altering the affinity of the ribosome for aminoacyl-tRNA, thus increasing their reactivity as acceptors for peptidyl transferase. The protein is Elongation factor P of Azotobacter vinelandii (strain DJ / ATCC BAA-1303).